The sequence spans 1372 residues: DNA-directed RNA polymerase subunit beta (1372 aa).

Belongs to the RNA polymerase beta chain family. The RNAP catalytic core consists of 2 alpha, 1 beta, 1 beta' and 1 omega subunit. When a sigma factor is associated with the core the holoenzyme is formed, which can initiate transcription.

It carries out the reaction RNA(n) + a ribonucleoside 5'-triphosphate = RNA(n+1) + diphosphate. Functionally, DNA-dependent RNA polymerase catalyzes the transcription of DNA into RNA using the four ribonucleoside triphosphates as substrates. The polypeptide is DNA-directed RNA polymerase subunit beta (Psychrobacter cryohalolentis (strain ATCC BAA-1226 / DSM 17306 / VKM B-2378 / K5)).